Here is a 163-residue protein sequence, read N- to C-terminus: Nucleotide-binding protein BC_1159 (163 aa).

This sequence belongs to the YajQ family.

Nucleotide-binding protein. This chain is Nucleotide-binding protein BC_1159, found in Bacillus cereus (strain ATCC 14579 / DSM 31 / CCUG 7414 / JCM 2152 / NBRC 15305 / NCIMB 9373 / NCTC 2599 / NRRL B-3711).